A 193-amino-acid polypeptide reads, in one-letter code: Phosphoheptose isomerase (193 aa).

The 157-residue stretch at Ile-37–Asn-193 folds into the SIS domain. Residue Asn-52–Gly-54 participates in substrate binding. Zn(2+) contacts are provided by His-61 and Glu-65. Residues Glu-65, Asn-93–Asp-94, Ser-119–Ser-121, Ser-124, and Gln-172 each bind substrate. Zn(2+) is bound by residues Gln-172 and His-180.

The protein belongs to the SIS family. GmhA subfamily. As to quaternary structure, homotetramer. It depends on Zn(2+) as a cofactor.

It is found in the cytoplasm. The catalysed reaction is 2 D-sedoheptulose 7-phosphate = D-glycero-alpha-D-manno-heptose 7-phosphate + D-glycero-beta-D-manno-heptose 7-phosphate. Its pathway is carbohydrate biosynthesis; D-glycero-D-manno-heptose 7-phosphate biosynthesis; D-glycero-alpha-D-manno-heptose 7-phosphate and D-glycero-beta-D-manno-heptose 7-phosphate from sedoheptulose 7-phosphate: step 1/1. Its function is as follows. Catalyzes the isomerization of sedoheptulose 7-phosphate in D-glycero-D-manno-heptose 7-phosphate. The polypeptide is Phosphoheptose isomerase (Buchnera aphidicola subsp. Acyrthosiphon pisum (strain 5A)).